The chain runs to 1410 residues: Pogo transposable element with ZNF domain (1410 aa).

Residues 238–291 (RSTVPQSQSQQTKSTPSTSTTPTATQPTSLGQLAVQSPGQSNQTTNPKLAPSFP) form a disordered region. Residues 239–266 (STVPQSQSQQTKSTPSTSTTPTATQPTS) show a composition bias toward low complexity. Residues 267-284 (LGQLAVQSPGQSNQTTNP) are compositionally biased toward polar residues. Lys-319 is covalently cross-linked (Glycyl lysine isopeptide (Lys-Gly) (interchain with G-Cter in SUMO2)). A disordered region spans residues 332–361 (QSPGPVVVSNNSSAHGSQRTSGPESSMKVT). Residue Ser-333 is modified to Phosphoserine. Polar residues predominate over residues 345 to 361 (AHGSQRTSGPESSMKVT). Lys-359 participates in a covalent cross-link: Glycyl lysine isopeptide (Lys-Gly) (interchain with G-Cter in SUMO2). Ser-363 carries the phosphoserine modification. The C2H2-type 1; atypical zinc finger occupies 375–397 (KICPRCNAQFRVTEALRGHMCYC). The interval 409-456 (KSLDSEPSVPSAAKPPSPEKTAPVASTPSSTPIPALSPPTKVPEPNEN) is disordered. Residue Lys-422 forms a Glycyl lysine isopeptide (Lys-Gly) (interchain with G-Cter in SUMO2) linkage. Ser-425 carries the phosphoserine modification. Phosphothreonine is present on Thr-439. Ser-445 is subject to Phosphoserine. Lys-449 participates in a covalent cross-link: Glycyl lysine isopeptide (Lys-Gly) (interchain with G-Cter in SUMO2). Thr-463 carries the post-translational modification Phosphothreonine. Lys-489 participates in a covalent cross-link: Glycyl lysine isopeptide (Lys-Gly) (interchain with G-Cter in SUMO2). 6 C2H2-type zinc fingers span residues 494–516 (FRCPHCTKRLKNNIRFMNHMKHH), 530–553 (TICQHCYRQFSTPFQLQCHLENVH), 560–583 (TKCKICEWAFESEPLFLQHMKDTH), 590–613 (YVCQVCQYRSSLYSEVDVHFRMIH), 619–641 (LLCPYCLKVFKNGNAFQQHYMRH), and 647–670 (YHCNKCRLQFLFAKDKIEHKLQHH). A Glycyl lysine isopeptide (Lys-Gly) (interchain with G-Cter in SUMO2) cross-link involves residue Lys-629. Lys-677 participates in a covalent cross-link: Glycyl lysine isopeptide (Lys-Gly) (interchain with G-Cter in SUMO2). The disordered stretch occupies residues 693-715 (SRGQPRTVPVSSNDTPPSALQEA). Polar residues predominate over residues 701 to 710 (PVSSNDTPPS). The segment at 771 to 794 (VHCSLCRYSTCCSRAYANHMINNH) adopts a C2H2-type 8 zinc-finger fold. A Glycyl lysine isopeptide (Lys-Gly) (interchain with G-Cter in SUMO2) cross-link involves residue Lys-801. The segment at 810 to 850 (VSGIKLACTSCTFVTSVGDAMAKHLVFNPSHRSSSILPRGL) is required for interaction with CBX5. Residues 815–840 (LACTSCTFVTSVGDAMAKHLVFNPSH) form a C2H2-type 9 zinc finger. Ser-856 bears the Phosphoserine mark. Disordered regions lie at residues 857 to 927 (RHGQ…PQAL) and 942 to 969 (VDDQDEGSPVTQEPELASGGGGSGGVGK). Basic and acidic residues predominate over residues 860–870 (QTRDRVHDRNV). Lys-883 participates in a covalent cross-link: Glycyl lysine isopeptide (Lys-Gly) (interchain with G-Cter in SUMO2). A compositionally biased stretch (low complexity) spans 892-915 (ATPAEPEELLTPLAPALPSPASTA). One can recognise an HTH CENPB-type domain in the interval 1015 to 1085 (GENLEGKYLS…MLRHHLTPHA (71 aa)). Residues 1117–1323 (LPLSMIVAID…DCPELVQRSF (207 aa)) form the DDE-1 domain. Phosphoserine is present on Ser-1338. Residues 1340 to 1360 (TRNADMQEELIASLEEQLKLS) are a coiled coil. The tract at residues 1360–1400 (SGEHSESSTPRPRSSPEETIEPESLHQLFEGESETESFYGF) is disordered. 2 positions are modified to phosphoserine: Ser-1364 and Ser-1367. Residue Thr-1368 is modified to Phosphothreonine. 2 positions are modified to phosphoserine: Ser-1373 and Ser-1374. Thr-1378 is subject to Phosphothreonine. Positions 1380–1404 (EPESLHQLFEGESETESFYGFEEAD) match the Integrase domain-binding motif (IBM) motif. At Ser-1392 the chain carries Phosphoserine; by CK2. Thr-1394 is subject to Phosphothreonine. A Phosphoserine; by CK2 modification is found at Ser-1396.

In terms of assembly, interacts with CBX1, CBX3, MAD2L2 and CHAMP1. Interacts with CBX5; POGZ competes with PXVXL motif-containing proteins such as INCENP and TRIM28 for interaction with CBX5. Interacts (via IBM motif) with PSIP1 isoform 1 (via IBD domain); phosphorylation increases its affinity for PSIP1. Interacts with HDGFL2. Phosphorylation increases its interaction with PSIP1.

The protein resides in the nucleus. It is found in the chromosome. Its subcellular location is the cytoplasm. In terms of biological role, plays a role in mitotic cell cycle progression and is involved in kinetochore assembly and mitotic sister chromatid cohesion. Probably through its association with CBX5 plays a role in mitotic chromosome segregation by regulating aurora kinase B/AURKB activation and AURKB and CBX5 dissociation from chromosome arms. Promotes the repair of DNA double-strand breaks through the homologous recombination pathway. This is Pogo transposable element with ZNF domain (POGZ) from Homo sapiens (Human).